We begin with the raw amino-acid sequence, 623 residues long: E3 ubiquitin-protein ligase ORTHRUS 5 (623 aa).

The PHD-type zinc finger occupies 12–62 (DGVCMRCQVNPPSEETLTCGTCVTPWHVSCLLPESLASSTGDWECPDCSGV). The RING-type 1 zinc finger occupies 129–169 (CSICIQLPERPVTTPCGHNFCLKCFEKWAVGQGKLTCMICR). One can recognise a YDG domain in the interval 258 to 407 (TRNQGVLVGE…HKMCRYLFVR (150 aa)). An RING-type 2 zinc finger spans residues 498–555 (CQICRKVLSLPVTTPCAHNFCKACLEAKFAGITQLRDRSNGVRKLRAKKNIMTCPCCT). Residues 580 to 623 (KSEEEAEVAESSNISEEEGEEESEPPTKKIKMDKNSVGGTSLSA) form a disordered region. The span at 594–603 (SEEEGEEESE) shows a compositional bias: acidic residues. The span at 604 to 613 (PPTKKIKMDK) shows a compositional bias: basic and acidic residues.

As to expression, expressed in inflorescences.

The protein localises to the nucleus. The enzyme catalyses S-ubiquitinyl-[E2 ubiquitin-conjugating enzyme]-L-cysteine + [acceptor protein]-L-lysine = [E2 ubiquitin-conjugating enzyme]-L-cysteine + N(6)-ubiquitinyl-[acceptor protein]-L-lysine.. It participates in protein modification; protein ubiquitination. In terms of biological role, E3 ubiquitin-protein ligase. Participates in CpG methylation-dependent transcriptional regulation and epigenetic transcriptional silencing. Mediates ubiquitination with the E2 ubiquitin-conjugating enzyme UBC11. This Arabidopsis thaliana (Mouse-ear cress) protein is E3 ubiquitin-protein ligase ORTHRUS 5 (ORTH5).